Consider the following 600-residue polypeptide: Prostaglandin G/H synthase 1 (600 aa).

An N-terminal signal peptide occupies residues 1 to 24; the sequence is MSRQGISLRFPLLLLLLSPSPVLP. Residues 32–70 enclose the EGF-like domain; the sequence is PVNPCCYYPCQHQGICVRFGLDRYQCDCTRTGYYGPNCT. Intrachain disulfides connect Cys36/Cys47, Cys37/Cys159, Cys41/Cys57, and Cys59/Cys69. N-linked (GlcNAc...) asparagine glycosylation is found at Asn68, Asn104, and Asn144. His207 acts as the Proton acceptor in catalysis. Tyr385 functions as the For cyclooxygenase activity in the catalytic mechanism. His388 serves as a coordination point for heme b. The N-linked (GlcNAc...) asparagine glycan is linked to Asn410. The cysteines at positions 569 and 575 are disulfide-linked.

The protein belongs to the prostaglandin G/H synthase family. Homodimer. The cofactor is heme b.

The protein localises to the microsome membrane. It is found in the endoplasmic reticulum membrane. It carries out the reaction (5Z,8Z,11Z,14Z)-eicosatetraenoate + AH2 + 2 O2 = prostaglandin H2 + A + H2O. The enzyme catalyses (5Z,8Z,11Z,14Z)-eicosatetraenoate + 2 O2 = prostaglandin G2. It catalyses the reaction prostaglandin G2 + AH2 = prostaglandin H2 + A + H2O. The catalysed reaction is (9Z,12Z)-octadecadienoate + AH2 + O2 = (9R)-hydroxy-(10E,12Z)-octadecadienoate + A + H2O. It carries out the reaction (9Z,12Z)-octadecadienoate + AH2 + O2 = (9S)-hydroxy-(10E,12Z)-octadecadienoate + A + H2O. The enzyme catalyses (9Z,12Z)-octadecadienoate + AH2 + O2 = (13S)-hydroxy-(9Z,11E)-octadecadienoate + A + H2O. It catalyses the reaction (9Z,12Z)-octadecadienoate + AH2 + O2 = (13R)-hydroxy-(9Z,11E)-octadecadienoate + A + H2O. Its pathway is lipid metabolism; prostaglandin biosynthesis. The cyclooxygenase activity is inhibited by nonsteroidal anti-inflammatory drugs (NSAIDs) including ibuprofen, flurbiprofen, ketoprofen, naproxen, flurbiprofen, anirolac, fenclofenac and diclofenac. Its function is as follows. Dual cyclooxygenase and peroxidase that plays an important role in the biosynthesis pathway of prostanoids, a class of C20 oxylipins mainly derived from arachidonate ((5Z,8Z,11Z,14Z)-eicosatetraenoate, AA, C20:4(n-6)), with a particular role in the inflammatory response. The cyclooxygenase activity oxygenates AA to the hydroperoxy endoperoxide prostaglandin G2 (PGG2), and the peroxidase activity reduces PGG2 to the hydroxy endoperoxide prostaglandin H2 (PGH2), the precursor of all 2-series prostaglandins and thromboxanes. This complex transformation is initiated by abstraction of hydrogen at carbon 13 (with S-stereochemistry), followed by insertion of molecular O2 to form the endoperoxide bridge between carbon 9 and 11 that defines prostaglandins. The insertion of a second molecule of O2 (bis-oxygenase activity) yields a hydroperoxy group in PGG2 that is then reduced to PGH2 by two electrons. Involved in the constitutive production of prostanoids in particular in the stomach and platelets. In gastric epithelial cells, it is a key step in the generation of prostaglandins, such as prostaglandin E2 (PGE2), which plays an important role in cytoprotection. In platelets, it is involved in the generation of thromboxane A2 (TXA2), which promotes platelet activation and aggregation, vasoconstriction and proliferation of vascular smooth muscle cells. Can also use linoleate (LA, (9Z,12Z)-octadecadienoate, C18:2(n-6)) as substrate and produce hydroxyoctadecadienoates (HODEs) in a regio- and stereospecific manner, being (9R)-HODE ((9R)-hydroxy-(10E,12Z)-octadecadienoate) and (13S)-HODE ((13S)-hydroxy-(9Z,11E)-octadecadienoate) its major products. This Bos taurus (Bovine) protein is Prostaglandin G/H synthase 1 (PTGS1).